Consider the following 597-residue polypeptide: HECT-type ubiquitin ligase-interacting protein creD (597 aa).

Disordered stretches follow at residues 375–398 (EVDP…GTLS), 439–492 (ASEH…MATP), and 576–597 (SRSH…RGRA). Polar residues predominate over residues 452–466 (GPPSGSNTHGSNTHA). A compositionally biased stretch (basic and acidic residues) spans 472 to 483 (LSRRASDEDVHD).

This sequence belongs to the arrestin family. As to quaternary structure, interacts with hulA.

Component of the regulatory network controlling carbon source utilization through ubiquitination and deubiquitination involving creA, creB, creC, creD and acrB. May be involved in signaling by recognizing appropriately phosphorylated substrates via its arrestin domains and then recruit a HECT-type ubiquitin ligase such as hulA, leading to ubiquitination of the substrate, providing a link between ubiquitination and phosphorylation in protein regulation and stability. This is HECT-type ubiquitin ligase-interacting protein creD (creD) from Emericella nidulans (strain FGSC A4 / ATCC 38163 / CBS 112.46 / NRRL 194 / M139) (Aspergillus nidulans).